Here is a 599-residue protein sequence, read N- to C-terminus: Elongation factor 4 (599 aa).

In terms of domain architecture, tr-type G spans 2–184 (KNIRNFSIIA…RLVRDIPPPE (183 aa)). GTP-binding positions include 14-19 (DHGKST) and 131-134 (NKID).

The protein belongs to the TRAFAC class translation factor GTPase superfamily. Classic translation factor GTPase family. LepA subfamily.

It is found in the cell inner membrane. It catalyses the reaction GTP + H2O = GDP + phosphate + H(+). Its function is as follows. Required for accurate and efficient protein synthesis under certain stress conditions. May act as a fidelity factor of the translation reaction, by catalyzing a one-codon backward translocation of tRNAs on improperly translocated ribosomes. Back-translocation proceeds from a post-translocation (POST) complex to a pre-translocation (PRE) complex, thus giving elongation factor G a second chance to translocate the tRNAs correctly. Binds to ribosomes in a GTP-dependent manner. This chain is Elongation factor 4, found in Klebsiella pneumoniae subsp. pneumoniae (strain ATCC 700721 / MGH 78578).